Reading from the N-terminus, the 178-residue chain is Ribosomal RNA small subunit methyltransferase G (178 aa).

Residues Gly-54, Leu-59, 105–106 (LE), and Arg-120 each bind S-adenosyl-L-methionine.

Belongs to the methyltransferase superfamily. RNA methyltransferase RsmG family.

Its subcellular location is the cytoplasm. It carries out the reaction guanosine(527) in 16S rRNA + S-adenosyl-L-methionine = N(7)-methylguanosine(527) in 16S rRNA + S-adenosyl-L-homocysteine. Its function is as follows. Specifically methylates the N7 position of guanine in position 527 of 16S rRNA. The polypeptide is Ribosomal RNA small subunit methyltransferase G (Helicobacter pylori (strain J99 / ATCC 700824) (Campylobacter pylori J99)).